The chain runs to 100 residues: Urease subunit gamma (100 aa).

Belongs to the urease gamma subunit family. As to quaternary structure, heterotrimer of UreA (gamma), UreB (beta) and UreC (alpha) subunits. Three heterotrimers associate to form the active enzyme.

It localises to the cytoplasm. It catalyses the reaction urea + 2 H2O + H(+) = hydrogencarbonate + 2 NH4(+). It functions in the pathway nitrogen metabolism; urea degradation; CO(2) and NH(3) from urea (urease route): step 1/1. This Prochlorococcus marinus (strain MIT 9301) protein is Urease subunit gamma.